The primary structure comprises 133 residues: Ribonuclease P protein component (133 aa).

The disordered stretch occupies residues 114–133; that stretch reads RSRPTPEEKSEPAGVDSTDA.

It belongs to the RnpA family. Consists of a catalytic RNA component (M1 or rnpB) and a protein subunit.

It carries out the reaction Endonucleolytic cleavage of RNA, removing 5'-extranucleotides from tRNA precursor.. Its function is as follows. RNaseP catalyzes the removal of the 5'-leader sequence from pre-tRNA to produce the mature 5'-terminus. It can also cleave other RNA substrates such as 4.5S RNA. The protein component plays an auxiliary but essential role in vivo by binding to the 5'-leader sequence and broadening the substrate specificity of the ribozyme. The chain is Ribonuclease P protein component from Pseudomonas syringae pv. tomato (strain ATCC BAA-871 / DC3000).